Reading from the N-terminus, the 255-residue chain is Diphthine--ammonia ligase (255 aa).

It belongs to the Diphthine--ammonia ligase family.

The catalysed reaction is diphthine-[translation elongation factor 2] + NH4(+) + ATP = diphthamide-[translation elongation factor 2] + AMP + diphosphate + H(+). It functions in the pathway protein modification; peptidyl-diphthamide biosynthesis. Functionally, amidase that catalyzes the last step of diphthamide biosynthesis using ammonium and ATP. Diphthamide biosynthesis consists in the conversion of an L-histidine residue in the translation elongation factor eEF-2 (EEF2) to diphthamide. The sequence is that of Diphthine--ammonia ligase (dph6) from Danio rerio (Zebrafish).